Consider the following 447-residue polypeptide: N-succinylarginine dihydrolase (447 aa).

Residues 19–28 (AGLSFGNKAS), Asn-110, and 137–138 (HR) each bind substrate. Glu-174 is a catalytic residue. Arg-212 is a substrate binding site. The active site involves His-248. Residues Asp-250 and Asn-359 each coordinate substrate. The active-site Nucleophile is the Cys-365.

The protein belongs to the succinylarginine dihydrolase family. As to quaternary structure, homodimer.

The enzyme catalyses N(2)-succinyl-L-arginine + 2 H2O + 2 H(+) = N(2)-succinyl-L-ornithine + 2 NH4(+) + CO2. Its pathway is amino-acid degradation; L-arginine degradation via AST pathway; L-glutamate and succinate from L-arginine: step 2/5. Its function is as follows. Catalyzes the hydrolysis of N(2)-succinylarginine into N(2)-succinylornithine, ammonia and CO(2). The protein is N-succinylarginine dihydrolase of Escherichia coli O157:H7.